We begin with the raw amino-acid sequence, 1023 residues long: Probable beta-glucosidase E (1023 aa).

Residues 1 to 51 (MPKSYTPVHDSIPEEDHFSSDDESNFRLHRIDRSASRSQSPKENEGEPSIL) form a disordered region. The Cytoplasmic segment spans residues 1-128 (MPKSYTPVHD…AVYYSKTWWR (128 aa)). A compositionally biased stretch (basic and acidic residues) spans 11–45 (SIPEEDHFSSDDESNFRLHRIDRSASRSQSPKENE). The chain crosses the membrane as a helical; Signal-anchor for type II membrane protein span at residues 129–149 (TLVVVIIALGLLVWGFLKYAS). The Extracellular segment spans residues 150–1023 (TRGDIWEEYD…NLPLGKPFDP (874 aa)). N-linked (GlcNAc...) asparagine glycosylation is found at Asn-199 and Asn-387. Asp-415 is an active-site residue. Asn-458 and Asn-497 each carry an N-linked (GlcNAc...) asparagine glycan. Disordered stretches follow at residues 485–515 (WESPAPDGDGGPNFSSWTDDEFGFRYPGSPG) and 822–841 (NPSRLPAARPPDAVAPPSYD). Residues 827 to 838 (PAARPPDAVAPP) show a composition bias toward low complexity. Asn-848 is a glycosylation site (N-linked (GlcNAc...) asparagine). The segment at 873-909 (ATTPPPPNPEASGSATDQKPHRTKPSDAGGGAGGNPS) is disordered. 2 N-linked (GlcNAc...) asparagine glycosylation sites follow: Asn-964 and Asn-979.

It belongs to the glycosyl hydrolase 3 family.

It localises to the cell membrane. It catalyses the reaction Hydrolysis of terminal, non-reducing beta-D-glucosyl residues with release of beta-D-glucose.. The protein operates within glycan metabolism; cellulose degradation. Its function is as follows. Beta-glucosidases are one of a number of cellulolytic enzymes involved in the degradation of cellulosic biomass. Catalyzes the last step releasing glucose from the inhibitory cellobiose. This is Probable beta-glucosidase E (bglE) from Emericella nidulans (strain FGSC A4 / ATCC 38163 / CBS 112.46 / NRRL 194 / M139) (Aspergillus nidulans).